Here is a 175-residue protein sequence, read N- to C-terminus: Anterior gradient protein 2 homolog (175 aa).

An N-terminal signal peptide occupies residues 1–20; it reads MEKFSVSAILLLVAISGTLA. Residues 21 to 40 form a required to promote cell adhesion region; that stretch reads KDTTVKSGAKKDPKDSRPKL. Residues 24 to 44 form a disordered region; the sequence is TVKSGAKKDPKDSRPKLPQTL. A compositionally biased stretch (basic and acidic residues) spans 29–38; the sequence is AKKDPKDSRP. Short sequence motifs (homodimer stabilization; interchain) lie at residues 45–54 and 60–67; these read SRGWGDQLIW and EALYRSKT.

It belongs to the AGR family. As to quaternary structure, monomer and homodimer. Interacts with LYPD3 and DAG1 (alphaDAG1). Interacts with MUC2; disulfide-linked. In terms of tissue distribution, expressed in lung, skeletal muscle, testis, liver, stomach, colon, small intestine, the goblet cells of the intestine and the mucuous neck cells of the stomach.

The protein localises to the secreted. The protein resides in the endoplasmic reticulum. Functionally, required for MUC2 post-transcriptional synthesis and secretion. May play a role in the production of mucus by intestinal cells. Proto-oncogene that may play a role in cell migration, cell differentiation and cell growth. Promotes cell adhesion. This chain is Anterior gradient protein 2 homolog (Agr2), found in Mus musculus (Mouse).